The chain runs to 229 residues: Uracil-DNA glycosylase (229 aa).

Catalysis depends on Asp67, which acts as the Proton acceptor.

The protein belongs to the uracil-DNA glycosylase (UDG) superfamily. UNG family.

The protein localises to the cytoplasm. It catalyses the reaction Hydrolyzes single-stranded DNA or mismatched double-stranded DNA and polynucleotides, releasing free uracil.. In terms of biological role, excises uracil residues from the DNA which can arise as a result of misincorporation of dUMP residues by DNA polymerase or due to deamination of cytosine. The protein is Uracil-DNA glycosylase of Coxiella burnetii (strain CbuK_Q154) (Coxiella burnetii (strain Q154)).